The primary structure comprises 167 residues: 3-isopropylmalate dehydratase small subunit (167 aa).

The protein belongs to the LeuD family. LeuD type 2 subfamily. As to quaternary structure, heterodimer of LeuC and LeuD.

The catalysed reaction is (2R,3S)-3-isopropylmalate = (2S)-2-isopropylmalate. It functions in the pathway amino-acid biosynthesis; L-leucine biosynthesis; L-leucine from 3-methyl-2-oxobutanoate: step 2/4. Functionally, catalyzes the isomerization between 2-isopropylmalate and 3-isopropylmalate, via the formation of 2-isopropylmaleate. The polypeptide is 3-isopropylmalate dehydratase small subunit (Nitratidesulfovibrio vulgaris (strain ATCC 29579 / DSM 644 / CCUG 34227 / NCIMB 8303 / VKM B-1760 / Hildenborough) (Desulfovibrio vulgaris)).